The primary structure comprises 427 residues: Serine--tRNA ligase (427 aa).

Residue 236-238 (TAE) coordinates L-serine. 267-269 (RRE) lines the ATP pocket. Glutamate 290 contributes to the L-serine binding site. 354–357 (EISS) serves as a coordination point for ATP. An L-serine-binding site is contributed by serine 390.

This sequence belongs to the class-II aminoacyl-tRNA synthetase family. Type-1 seryl-tRNA synthetase subfamily. As to quaternary structure, homodimer. The tRNA molecule binds across the dimer.

It localises to the cytoplasm. The enzyme catalyses tRNA(Ser) + L-serine + ATP = L-seryl-tRNA(Ser) + AMP + diphosphate + H(+). It carries out the reaction tRNA(Sec) + L-serine + ATP = L-seryl-tRNA(Sec) + AMP + diphosphate + H(+). It participates in aminoacyl-tRNA biosynthesis; selenocysteinyl-tRNA(Sec) biosynthesis; L-seryl-tRNA(Sec) from L-serine and tRNA(Sec): step 1/1. Catalyzes the attachment of serine to tRNA(Ser). Is also able to aminoacylate tRNA(Sec) with serine, to form the misacylated tRNA L-seryl-tRNA(Sec), which will be further converted into selenocysteinyl-tRNA(Sec). The sequence is that of Serine--tRNA ligase from Picosynechococcus sp. (strain ATCC 27264 / PCC 7002 / PR-6) (Agmenellum quadruplicatum).